We begin with the raw amino-acid sequence, 409 residues long: Dual-specificity RNA methyltransferase RlmN (409 aa).

E121 functions as the Proton acceptor in the catalytic mechanism. The region spanning 127-376 (EEGRGTLCIS…IRTPRGRDIL (250 aa)) is the Radical SAM core domain. C134 and C379 are joined by a disulfide. C141, C145, and C148 together coordinate [4Fe-4S] cluster. Residues 205–206 (GE), S237, 259–261 (SLH), and N336 each bind S-adenosyl-L-methionine. The S-methylcysteine intermediate role is filled by C379.

The protein belongs to the radical SAM superfamily. RlmN family. [4Fe-4S] cluster serves as cofactor.

The protein resides in the cytoplasm. The enzyme catalyses adenosine(2503) in 23S rRNA + 2 reduced [2Fe-2S]-[ferredoxin] + 2 S-adenosyl-L-methionine = 2-methyladenosine(2503) in 23S rRNA + 5'-deoxyadenosine + L-methionine + 2 oxidized [2Fe-2S]-[ferredoxin] + S-adenosyl-L-homocysteine. It carries out the reaction adenosine(37) in tRNA + 2 reduced [2Fe-2S]-[ferredoxin] + 2 S-adenosyl-L-methionine = 2-methyladenosine(37) in tRNA + 5'-deoxyadenosine + L-methionine + 2 oxidized [2Fe-2S]-[ferredoxin] + S-adenosyl-L-homocysteine. In terms of biological role, specifically methylates position 2 of adenine 2503 in 23S rRNA and position 2 of adenine 37 in tRNAs. m2A2503 modification seems to play a crucial role in the proofreading step occurring at the peptidyl transferase center and thus would serve to optimize ribosomal fidelity. In Agrobacterium fabrum (strain C58 / ATCC 33970) (Agrobacterium tumefaciens (strain C58)), this protein is Dual-specificity RNA methyltransferase RlmN.